The following is a 131-amino-acid chain: Profilin-11 (131 aa).

Residues Cys13 and Cys115 are joined by a disulfide bond. The short motif at 81 to 97 (AVIRGKKGSGGITVKKT) is the Involved in PIP2 interaction element. Thr111 carries the post-translational modification Phosphothreonine.

This sequence belongs to the profilin family. As to quaternary structure, occurs in many kinds of cells as a complex with monomeric actin in a 1:1 ratio. In terms of processing, phosphorylated by MAP kinases.

Its subcellular location is the cytoplasm. It is found in the cytoskeleton. Functionally, binds to actin and affects the structure of the cytoskeleton. At high concentrations, profilin prevents the polymerization of actin, whereas it enhances it at low concentrations. The protein is Profilin-11 of Zea mays (Maize).